The following is a 665-amino-acid chain: tRNA 5-methylaminomethyl-2-thiouridine biosynthesis bifunctional protein MnmC (665 aa).

The tract at residues 1 to 243 (MSQTSLHHAR…KREMLAGERA (243 aa)) is tRNA (mnm(5)s(2)U34)-methyltransferase. An FAD-dependent cmnm(5)s(2)U34 oxidoreductase region spans residues 268–665 (IGGGIASAMT…RKLLKGKPLQ (398 aa)).

It in the N-terminal section; belongs to the methyltransferase superfamily. tRNA (mnm(5)s(2)U34)-methyltransferase family. This sequence in the C-terminal section; belongs to the DAO family. FAD serves as cofactor.

The protein resides in the cytoplasm. It catalyses the reaction 5-aminomethyl-2-thiouridine(34) in tRNA + S-adenosyl-L-methionine = 5-methylaminomethyl-2-thiouridine(34) in tRNA + S-adenosyl-L-homocysteine + H(+). Functionally, catalyzes the last two steps in the biosynthesis of 5-methylaminomethyl-2-thiouridine (mnm(5)s(2)U) at the wobble position (U34) in tRNA. Catalyzes the FAD-dependent demodification of cmnm(5)s(2)U34 to nm(5)s(2)U34, followed by the transfer of a methyl group from S-adenosyl-L-methionine to nm(5)s(2)U34, to form mnm(5)s(2)U34. This Aeromonas hydrophila subsp. hydrophila (strain ATCC 7966 / DSM 30187 / BCRC 13018 / CCUG 14551 / JCM 1027 / KCTC 2358 / NCIMB 9240 / NCTC 8049) protein is tRNA 5-methylaminomethyl-2-thiouridine biosynthesis bifunctional protein MnmC.